Reading from the N-terminus, the 133-residue chain is Small ribosomal subunit protein uS8 (133 aa).

This sequence belongs to the universal ribosomal protein uS8 family. In terms of assembly, part of the 30S ribosomal subunit. Contacts proteins S5 and S12.

In terms of biological role, one of the primary rRNA binding proteins, it binds directly to 16S rRNA central domain where it helps coordinate assembly of the platform of the 30S subunit. This Cyanothece sp. (strain PCC 7425 / ATCC 29141) protein is Small ribosomal subunit protein uS8.